We begin with the raw amino-acid sequence, 262 residues long: uncharacterized protein (262 aa).

The chain crosses the membrane as a helical span at residues Val-13–His-35.

Its subcellular location is the membrane. This is an uncharacterized protein from Archaeoglobus fulgidus (strain ATCC 49558 / DSM 4304 / JCM 9628 / NBRC 100126 / VC-16).